The sequence spans 208 residues: Putative thymidylate kinase (208 aa).

A defective ATP-binding region spans residues 8–15 (GIDGSGVS).

The protein belongs to the thymidylate kinase family.

It carries out the reaction dTMP + ATP = dTDP + ADP. In Aeropyrum pernix (strain ATCC 700893 / DSM 11879 / JCM 9820 / NBRC 100138 / K1), this protein is Putative thymidylate kinase (tmk).